A 262-amino-acid polypeptide reads, in one-letter code: Hydroxyethylthiazole kinase (262 aa).

Met50 contributes to the substrate binding site. Positions 125 and 171 each coordinate ATP. A substrate-binding site is contributed by Gly198.

Belongs to the Thz kinase family. It depends on Mg(2+) as a cofactor.

The enzyme catalyses 5-(2-hydroxyethyl)-4-methylthiazole + ATP = 4-methyl-5-(2-phosphooxyethyl)-thiazole + ADP + H(+). The protein operates within cofactor biosynthesis; thiamine diphosphate biosynthesis; 4-methyl-5-(2-phosphoethyl)-thiazole from 5-(2-hydroxyethyl)-4-methylthiazole: step 1/1. In terms of biological role, catalyzes the phosphorylation of the hydroxyl group of 4-methyl-5-beta-hydroxyethylthiazole (THZ). The sequence is that of Hydroxyethylthiazole kinase from Shigella boydii serotype 18 (strain CDC 3083-94 / BS512).